A 130-amino-acid polypeptide reads, in one-letter code: Fluoride-specific ion channel FluC (130 aa).

The next 4 helical transmembrane spans lie at 3-23 (FVFL…YFVG), 38-58 (LGTF…GHLA), 67-87 (FGIF…SYGL), and 102-122 (VSYV…GWFL). Residues Gly-77 and Thr-80 each contribute to the Na(+) site.

Belongs to the fluoride channel Fluc/FEX (TC 1.A.43) family.

It is found in the cell inner membrane. It carries out the reaction fluoride(in) = fluoride(out). With respect to regulation, na(+) is not transported, but it plays an essential structural role and its presence is essential for fluoride channel function. In terms of biological role, fluoride-specific ion channel. Important for reducing fluoride concentration in the cell, thus reducing its toxicity. The chain is Fluoride-specific ion channel FluC from Helicobacter pylori (strain HPAG1).